Reading from the N-terminus, the 312-residue chain is Glyoxylate/hydroxypyruvate reductase A (312 aa).

The active site involves Arg227. Catalysis depends on His275, which acts as the Proton donor.

The protein belongs to the D-isomer specific 2-hydroxyacid dehydrogenase family. GhrA subfamily.

Its subcellular location is the cytoplasm. It catalyses the reaction glycolate + NADP(+) = glyoxylate + NADPH + H(+). The enzyme catalyses (R)-glycerate + NAD(+) = 3-hydroxypyruvate + NADH + H(+). The catalysed reaction is (R)-glycerate + NADP(+) = 3-hydroxypyruvate + NADPH + H(+). Catalyzes the NADPH-dependent reduction of glyoxylate and hydroxypyruvate into glycolate and glycerate, respectively. The chain is Glyoxylate/hydroxypyruvate reductase A from Enterobacter sp. (strain 638).